The sequence spans 383 residues: uncharacterized protein (383 aa).

Belongs to the peptidase M20 family.

This is an uncharacterized protein from Staphylococcus aureus (strain bovine RF122 / ET3-1).